Consider the following 331-residue polypeptide: Anthranilate phosphoribosyltransferase (331 aa).

5-phospho-alpha-D-ribose 1-diphosphate is bound by residues Gly-78, 81 to 82 (GD), Thr-86, 88 to 91 (NVST), 106 to 114 (KHGNYSVSS), and Ser-118. Gly-78 lines the anthranilate pocket. Ser-90 contacts Mg(2+). Residue Asn-109 coordinates anthranilate. Residue Arg-164 participates in anthranilate binding. 2 residues coordinate Mg(2+): Asp-222 and Glu-223.

The protein belongs to the anthranilate phosphoribosyltransferase family. In terms of assembly, homodimer. The cofactor is Mg(2+).

It catalyses the reaction N-(5-phospho-beta-D-ribosyl)anthranilate + diphosphate = 5-phospho-alpha-D-ribose 1-diphosphate + anthranilate. It participates in amino-acid biosynthesis; L-tryptophan biosynthesis; L-tryptophan from chorismate: step 2/5. Functionally, catalyzes the transfer of the phosphoribosyl group of 5-phosphorylribose-1-pyrophosphate (PRPP) to anthranilate to yield N-(5'-phosphoribosyl)-anthranilate (PRA). The polypeptide is Anthranilate phosphoribosyltransferase (Haloferax volcanii (strain ATCC 29605 / DSM 3757 / JCM 8879 / NBRC 14742 / NCIMB 2012 / VKM B-1768 / DS2) (Halobacterium volcanii)).